Consider the following 478-residue polypeptide: Protein trichome birefringence-like 20 (478 aa).

A helical; Signal-anchor for type II membrane protein membrane pass occupies residues 10–30 (IGLVIFPLILLTIAPILYLFF). Residues 50-68 (SSAISSPSRYNHSSSSSDS) are compositionally biased toward low complexity. The segment at 50 to 125 (SSAISSPSRY…KEHRRKKRKR (76 aa)) is disordered. The segment covering 92-110 (SSSLHNNDRLSISSSNGHH) has biased composition (polar residues). Residues 112–125 (VTPKKEHRRKKRKR) are compositionally biased toward basic residues. Positions 200–202 (GDS) match the GDS motif motif. Residues 447-461 (DCVHWCLPGPIDSWN) carry the DCXHWCLPGXXDXWN motif motif.

This sequence belongs to the PC-esterase family. TBL subfamily.

It localises to the membrane. Its function is as follows. May act as a bridging protein that binds pectin and other cell wall polysaccharides. Probably involved in maintaining esterification of pectins. May be involved in the specific O-acetylation of cell wall polymers. The sequence is that of Protein trichome birefringence-like 20 (TBL20) from Arabidopsis thaliana (Mouse-ear cress).